Reading from the N-terminus, the 368-residue chain is Alanine racemase (368 aa).

The active-site Proton acceptor; specific for D-alanine is the Lys-40. The residue at position 40 (Lys-40) is an N6-(pyridoxal phosphate)lysine. Residue Arg-136 participates in substrate binding. Tyr-263 functions as the Proton acceptor; specific for L-alanine in the catalytic mechanism. Position 310 (Met-310) interacts with substrate.

It belongs to the alanine racemase family. Pyridoxal 5'-phosphate is required as a cofactor.

The enzyme catalyses L-alanine = D-alanine. Its pathway is amino-acid biosynthesis; D-alanine biosynthesis; D-alanine from L-alanine: step 1/1. Its function is as follows. Catalyzes the interconversion of L-alanine and D-alanine. May also act on other amino acids. This chain is Alanine racemase (alr), found in Streptococcus gordonii (strain Challis / ATCC 35105 / BCRC 15272 / CH1 / DL1 / V288).